Consider the following 95-residue polypeptide: Large ribosomal subunit protein uL23c (95 aa).

The protein belongs to the universal ribosomal protein uL23 family. Part of the 50S ribosomal subunit.

Its subcellular location is the plastid. It localises to the chloroplast. In terms of biological role, binds to 23S rRNA. This chain is Large ribosomal subunit protein uL23c (rpl23), found in Guillardia theta (Cryptophyte).